The chain runs to 466 residues: DNA polymerase delta subunit 3 (466 aa).

Position 2 is an N-acetylalanine (Ala2). Disordered regions lie at residues 145-218 (PAES…KEVM) and 255-466 (EQEV…FQRK). Basic and acidic residues-rich tracts occupy residues 205–218 (DANK…KEVM), 255–265 (EQEVKEEKKVE), and 281–297 (DLKK…MQQK). Residue Lys259 forms a Glycyl lysine isopeptide (Lys-Gly) (interchain with G-Cter in SUMO); alternate linkage. A Glycyl lysine isopeptide (Lys-Gly) (interchain with G-Cter in SUMO2); alternate cross-link involves residue Lys259. A Glycyl lysine isopeptide (Lys-Gly) (interchain with G-Cter in SUMO2) cross-link involves residue Lys262. At Ser308 the chain carries Phosphoserine. A compositionally biased stretch (pro residues) spans 350-360 (PSPPPPSPSPE). Residues Ser407 and Ser409 each carry the phosphoserine modification. Residue Thr411 is modified to Phosphothreonine. Ser413 bears the Phosphoserine mark. Basic and acidic residues predominate over residues 432–441 (VKKEPKEERK). A Glycyl lysine isopeptide (Lys-Gly) (interchain with G-Cter in SUMO); alternate cross-link involves residue Lys433. A Glycyl lysine isopeptide (Lys-Gly) (interchain with G-Cter in SUMO2); alternate cross-link involves residue Lys433. The short motif at 456-463 (QVAITGFF) is the PIP-box element.

Component of both the DNA polymerase delta and DNA polymerase zeta complexes. The tetrameric DNA polymerase delta complex (Pol-delta4), which consists of POLD1/p125, POLD2/p50, POLD3/p66/p68 and POLD4/p12, with POLD1 bearing DNA polymerase and 3' to 5' proofreading exonuclease activities. Within this complex, directly interacts with POLD2. Following stress caused by DNA damaging agents or by replication stress, POLD4 is degraded and Pol-delta4 is converted into a trimeric form of the complex (Pol-delta3), which consists of POLD1, POLD2 and POLD3. Pol-delta3 is the major form occurring at S phase replication sites, as well as DNA damage sites. Directly interacts with PCNA, as do POLD1 and POLD4; this interaction stimulates Pol-delta polymerase activity. Component of the DNA polymerase zeta complex (POLZ), which consists of REV3L, MAD2L2, POLD2 and POLD3, with REV3L bearing DNA polymerase catalytic activity. The DNA polymerase delta complex interacts with POLDIP2; this interaction is probably mediated through direct binding to POLD2. In terms of processing, ubiquitinated, but not targeted to the proteasome. Sumoylated. Sumoylation by SUMO3 may be predominant.

The protein localises to the cytoplasm. It is found in the nucleus. Accessory component of both the DNA polymerase delta complex and the DNA polymerase zeta complex. As a component of the trimeric and tetrameric DNA polymerase delta complexes (Pol-delta3 and Pol-delta4, respectively), plays a role in high fidelity genome replication, including in lagging strand synthesis, and repair. Required for optimal Pol-delta activity. Stabilizes the Pol-delta complex and plays a major role in Pol-delta stimulation by PCNA. Pol-delta3 and Pol-delta4 are characterized by the absence or the presence of POLD4. They exhibit differences in catalytic activity. Most notably, Pol-delta3 shows higher proofreading activity than Pol-delta4. Although both Pol-delta3 and Pol-delta4 process Okazaki fragments in vitro, Pol-delta3 may also be better suited to fulfill this task, exhibiting near-absence of strand displacement activity compared to Pol-delta4 and stalling on encounter with the 5'-blocking oligonucleotides. Pol-delta3 idling process may avoid the formation of a gap, while maintaining a nick that can be readily ligated. Along with DNA polymerase kappa, DNA polymerase delta carries out approximately half of nucleotide excision repair (NER) synthesis following UV irradiation. In this context, POLD3, along with PCNA and RFC1-replication factor C complex, is required to recruit POLD1, the catalytic subunit of the polymerase delta complex, to DNA damage sites. Under conditions of DNA replication stress, required for the repair of broken replication forks through break-induced replication (BIR). Involved in the translesion synthesis (TLS) of templates carrying O6-methylguanine or abasic sites performed by Pol-delta4, independently of DNA polymerase zeta (REV3L) or eta (POLH). Facilitates abasic site bypass by DNA polymerase delta by promoting extension from the nucleotide inserted opposite the lesion. Also involved in TLS, as a component of the tetrameric DNA polymerase zeta complex. Along with POLD2, dramatically increases the efficiency and processivity of DNA synthesis of the DNA polymerase zeta complex compared to the minimal zeta complex, consisting of only REV3L and REV7. This Bos taurus (Bovine) protein is DNA polymerase delta subunit 3 (POLD3).